Consider the following 204-residue polypeptide: Large ribosomal subunit protein eL15 (204 aa).

It belongs to the eukaryotic ribosomal protein eL15 family. In terms of assembly, component of the large ribosomal subunit.

The protein localises to the cytoplasm. Its function is as follows. Component of the large ribosomal subunit. The ribosome is a large ribonucleoprotein complex responsible for the synthesis of proteins in the cell. This is Large ribosomal subunit protein eL15 (rpl15) from Silurus asotus (Amur catfish).